A 138-amino-acid polypeptide reads, in one-letter code: Large ribosomal subunit protein uL16 (138 aa).

Over residues 1–13 the composition is skewed to basic residues; sequence MLQPKRRKYRKEQ. The interval 1-22 is disordered; sequence MLQPKRRKYRKEQKGRNTGVAT.

The protein belongs to the universal ribosomal protein uL16 family. Part of the 50S ribosomal subunit.

Its function is as follows. Binds 23S rRNA and is also seen to make contacts with the A and possibly P site tRNAs. In Paraburkholderia phymatum (strain DSM 17167 / CIP 108236 / LMG 21445 / STM815) (Burkholderia phymatum), this protein is Large ribosomal subunit protein uL16.